The chain runs to 27 residues: Cruzioseptin-14 (27 aa).

As to expression, expressed by the skin glands.

It is found in the secreted. Functionally, has antimicrobial activity. The protein is Cruzioseptin-14 of Cruziohyla calcarifer (Splendid leaf frog).